The chain runs to 249 residues: Ubiquinone/menaquinone biosynthesis C-methyltransferase UbiE (249 aa).

Residues T72, D93, and 121–122 (DA) each bind S-adenosyl-L-methionine.

Belongs to the class I-like SAM-binding methyltransferase superfamily. MenG/UbiE family.

It carries out the reaction a 2-demethylmenaquinol + S-adenosyl-L-methionine = a menaquinol + S-adenosyl-L-homocysteine + H(+). The enzyme catalyses a 2-methoxy-6-(all-trans-polyprenyl)benzene-1,4-diol + S-adenosyl-L-methionine = a 5-methoxy-2-methyl-3-(all-trans-polyprenyl)benzene-1,4-diol + S-adenosyl-L-homocysteine + H(+). It functions in the pathway quinol/quinone metabolism; menaquinone biosynthesis; menaquinol from 1,4-dihydroxy-2-naphthoate: step 2/2. It participates in cofactor biosynthesis; ubiquinone biosynthesis. Methyltransferase required for the conversion of demethylmenaquinol (DMKH2) to menaquinol (MKH2) and the conversion of 2-polyprenyl-6-methoxy-1,4-benzoquinol (DDMQH2) to 2-polyprenyl-3-methyl-6-methoxy-1,4-benzoquinol (DMQH2). This Cellvibrio japonicus (strain Ueda107) (Pseudomonas fluorescens subsp. cellulosa) protein is Ubiquinone/menaquinone biosynthesis C-methyltransferase UbiE.